We begin with the raw amino-acid sequence, 132 residues long: Fatty acid-binding protein 9 (132 aa).

6 positions are modified to phosphoserine: Ser13, Ser14, Ser40, Ser42, Ser44, and Ser91.

This sequence belongs to the calycin superfamily. Fatty-acid binding protein (FABP) family. In terms of tissue distribution, testis.

It localises to the cytoplasm. The sequence is that of Fatty acid-binding protein 9 (Fabp9) from Mus musculus (Mouse).